We begin with the raw amino-acid sequence, 169 residues long: Endoribonuclease YbeY (169 aa).

His-128, His-132, and His-138 together coordinate Zn(2+).

Belongs to the endoribonuclease YbeY family. The cofactor is Zn(2+).

Its subcellular location is the cytoplasm. Its function is as follows. Single strand-specific metallo-endoribonuclease involved in late-stage 70S ribosome quality control and in maturation of the 3' terminus of the 16S rRNA. In Rhizorhabdus wittichii (strain DSM 6014 / CCUG 31198 / JCM 15750 / NBRC 105917 / EY 4224 / RW1) (Sphingomonas wittichii), this protein is Endoribonuclease YbeY.